A 378-amino-acid chain; its full sequence is tRNA-specific 2-thiouridylase MnmA (378 aa).

Residues 14–21 and Leu40 contribute to the ATP site; that span reads AMSGGVDS. Cys109 (nucleophile) is an active-site residue. Cysteines 109 and 208 form a disulfide. Residue Gly133 coordinates ATP. An interaction with tRNA region spans residues 156 to 158; that stretch reads KDQ. Catalysis depends on Cys208, which acts as the Cysteine persulfide intermediate.

It belongs to the MnmA/TRMU family.

The protein resides in the cytoplasm. The catalysed reaction is S-sulfanyl-L-cysteinyl-[protein] + uridine(34) in tRNA + AH2 + ATP = 2-thiouridine(34) in tRNA + L-cysteinyl-[protein] + A + AMP + diphosphate + H(+). Its function is as follows. Catalyzes the 2-thiolation of uridine at the wobble position (U34) of tRNA, leading to the formation of s(2)U34. The chain is tRNA-specific 2-thiouridylase MnmA from Streptomyces griseus subsp. griseus (strain JCM 4626 / CBS 651.72 / NBRC 13350 / KCC S-0626 / ISP 5235).